The primary structure comprises 526 residues: ATP synthase subunit alpha (526 aa).

171-178 is a binding site for ATP; that stretch reads GDRQTGKT.

Belongs to the ATPase alpha/beta chains family. As to quaternary structure, F-type ATPases have 2 components, CF(1) - the catalytic core - and CF(0) - the membrane proton channel. CF(1) has five subunits: alpha(3), beta(3), gamma(1), delta(1), epsilon(1). CF(0) has four main subunits: a, b, b' and c.

The protein resides in the cell inner membrane. It carries out the reaction ATP + H2O + 4 H(+)(in) = ADP + phosphate + 5 H(+)(out). Functionally, produces ATP from ADP in the presence of a proton gradient across the membrane. The alpha chain is a regulatory subunit. In Pelodictyon phaeoclathratiforme (strain DSM 5477 / BU-1), this protein is ATP synthase subunit alpha.